The primary structure comprises 518 residues: Major facilitator superfamily multidrug transporter mfsC (518 aa).

A run of 7 helical transmembrane segments spans residues 27–47, 65–85, 88–108, 123–143, 152–172, 183–203, and 212–232; these read VLLT…SVLF, WVLI…GQLG, FGLE…NVIN, ISGV…SNTF, ALAI…VVGS, IFWL…LFLP, and PIDI…VYGL. The N-linked (GlcNAc...) asparagine glycan is linked to N233. The next 7 helical transmembrane spans lie at 242-262, 281-301, 315-335, 347-367, 380-400, 409-429, and 455-475; these read SAAM…FLWV, FLVM…WFFI, ILTA…GVFA, ILVA…FAGP, TAII…SILL, AVAG…ILAG, and AFWL…VCYW.

The protein belongs to the major facilitator superfamily. EmrB family.

It is found in the membrane. Its function is as follows. Major facilitator superfamily transporter that may be involved in A.fumigatus adaptation to azoles such as vorizonazole. This Aspergillus fumigatus (strain ATCC MYA-4609 / CBS 101355 / FGSC A1100 / Af293) (Neosartorya fumigata) protein is Major facilitator superfamily multidrug transporter mfsC.